Reading from the N-terminus, the 378-residue chain is Ferredoxin--NADP reductase, embryo isozyme, chloroplastic (378 aa).

The transit peptide at 1 to 62 directs the protein to the chloroplast; that stretch reads MASALGAQAS…SRHMNKIFSM (62 aa). Positions 93–221 constitute an FAD-binding FR-type domain; that stretch reads KEPYTATIVS…TGPSGKIMLL (129 aa). FAD contacts are provided by residues 153-156, 174-176, Tyr-180, 195-197, and Thr-237; these read RLYS, CVR, and ICS. Residues Ser-156 and Arg-176 each contribute to the NADP(+) site. NADP(+) is bound by residues Thr-237, 269-270, 299-300, Lys-309, 337-338, and Glu-376; these read VA, SR, and GL.

This sequence belongs to the ferredoxin--NADP reductase type 1 family. The cofactor is FAD.

Its subcellular location is the plastid. It localises to the chloroplast. It catalyses the reaction 2 reduced [2Fe-2S]-[ferredoxin] + NADP(+) + H(+) = 2 oxidized [2Fe-2S]-[ferredoxin] + NADPH. The protein operates within energy metabolism; photosynthesis. In terms of biological role, may play a key role in regulating the relative amounts of cyclic and non-cyclic electron flow to meet the demands of the plant for ATP and reducing power. Is involved in nitrate assimilation. The protein is Ferredoxin--NADP reductase, embryo isozyme, chloroplastic of Oryza sativa subsp. japonica (Rice).